The chain runs to 204 residues: Bombinin-like peptides 1 (204 aa).

Positions 1–16 form a signal peptide, or 18; the sequence is MNFKYIVAVSILIASA. Asn70 and Asn133 each carry asparagine amide.

The protein belongs to the bombinin family. Expressed by the skin glands.

The protein localises to the secreted. Has antimicrobial activity, but no hemolytic activity. Preference on killing Gram-negative non-enteric bacteria. The polypeptide is Bombinin-like peptides 1 (Bombina orientalis (Oriental fire-bellied toad)).